The primary structure comprises 120 residues: Immunoglobulin kappa variable 2-24 (120 aa).

Residues 1 to 19 (MRLLAQLLGLLMLWVPGSS) form the signal peptide. The 101-residue stretch at 20–120 (GDIVMTQTPL…YYCMQATQFP (101 aa)) folds into the Ig-like domain. Residues 21–43 (DIVMTQTPLSSPVTLGQPASISC) form a framework-1 region. The cysteines at positions 43 and 113 are disulfide-linked. Residues 44-59 (RSSQSLVHSDGNTYLS) are complementarity-determining-1. Positions 60–74 (WLQQRPGQPPRLLIY) are framework-2. Positions 75–81 (KISNRFS) are complementarity-determining-2. A framework-3 region spans residues 82–113 (GVPDRFSGSGAGTDFTLKISRVEAEDVGVYYC). The segment at 114–120 (MQATQFP) is complementarity-determining-3.

As to quaternary structure, immunoglobulins are composed of two identical heavy chains and two identical light chains; disulfide-linked.

The protein localises to the secreted. The protein resides in the cell membrane. Its function is as follows. V region of the variable domain of immunoglobulin light chains that participates in the antigen recognition. Immunoglobulins, also known as antibodies, are membrane-bound or secreted glycoproteins produced by B lymphocytes. In the recognition phase of humoral immunity, the membrane-bound immunoglobulins serve as receptors which, upon binding of a specific antigen, trigger the clonal expansion and differentiation of B lymphocytes into immunoglobulins-secreting plasma cells. Secreted immunoglobulins mediate the effector phase of humoral immunity, which results in the elimination of bound antigens. The antigen binding site is formed by the variable domain of one heavy chain, together with that of its associated light chain. Thus, each immunoglobulin has two antigen binding sites with remarkable affinity for a particular antigen. The variable domains are assembled by a process called V-(D)-J rearrangement and can then be subjected to somatic hypermutations which, after exposure to antigen and selection, allow affinity maturation for a particular antigen. The protein is Immunoglobulin kappa variable 2-24 of Homo sapiens (Human).